A 104-amino-acid polypeptide reads, in one-letter code: Large ribosomal subunit protein uL24 (104 aa).

The protein belongs to the universal ribosomal protein uL24 family. As to quaternary structure, part of the 50S ribosomal subunit.

Its function is as follows. One of two assembly initiator proteins, it binds directly to the 5'-end of the 23S rRNA, where it nucleates assembly of the 50S subunit. Functionally, one of the proteins that surrounds the polypeptide exit tunnel on the outside of the subunit. The polypeptide is Large ribosomal subunit protein uL24 (Shewanella halifaxensis (strain HAW-EB4)).